A 250-amino-acid chain; its full sequence is 2,3-bisphosphoglycerate-dependent phosphoglycerate mutase (250 aa).

Substrate contacts are provided by residues 8-15 (RHGESTWN), 21-22 (TG), arginine 60, 87-90 (ERHY), lysine 98, and 114-115 (RR). The active-site Tele-phosphohistidine intermediate is histidine 9. The active-site Proton donor/acceptor is the glutamate 87. The interval 116-135 (SYDTPPPPLAANDPRSERSD) is disordered. 183–184 (GN) lines the substrate pocket.

Belongs to the phosphoglycerate mutase family. BPG-dependent PGAM subfamily. In terms of assembly, homodimer.

The catalysed reaction is (2R)-2-phosphoglycerate = (2R)-3-phosphoglycerate. It participates in carbohydrate degradation; glycolysis; pyruvate from D-glyceraldehyde 3-phosphate: step 3/5. In terms of biological role, catalyzes the interconversion of 2-phosphoglycerate and 3-phosphoglycerate. The protein is 2,3-bisphosphoglycerate-dependent phosphoglycerate mutase of Polaromonas naphthalenivorans (strain CJ2).